We begin with the raw amino-acid sequence, 456 residues long: Asparagine--tRNA ligase (456 aa).

Belongs to the class-II aminoacyl-tRNA synthetase family. In terms of assembly, homodimer.

The protein localises to the cytoplasm. It carries out the reaction tRNA(Asn) + L-asparagine + ATP = L-asparaginyl-tRNA(Asn) + AMP + diphosphate + H(+). This chain is Asparagine--tRNA ligase, found in Mycoplasmoides gallisepticum (strain R(low / passage 15 / clone 2)) (Mycoplasma gallisepticum).